The chain runs to 210 residues: Ribosomal RNA large subunit methyltransferase E (210 aa).

Residues glycine 67, tryptophan 69, aspartate 87, aspartate 103, and aspartate 128 each coordinate S-adenosyl-L-methionine. Lysine 168 (proton acceptor) is an active-site residue.

Belongs to the class I-like SAM-binding methyltransferase superfamily. RNA methyltransferase RlmE family.

Its subcellular location is the cytoplasm. It carries out the reaction uridine(2552) in 23S rRNA + S-adenosyl-L-methionine = 2'-O-methyluridine(2552) in 23S rRNA + S-adenosyl-L-homocysteine + H(+). Its function is as follows. Specifically methylates the uridine in position 2552 of 23S rRNA at the 2'-O position of the ribose in the fully assembled 50S ribosomal subunit. The polypeptide is Ribosomal RNA large subunit methyltransferase E (Psychrobacter sp. (strain PRwf-1)).